An 832-amino-acid polypeptide reads, in one-letter code: MSCPPTPNPPFRPPSHTRVLRTPPLPPWVCLNSKSLSTGVGGQKNQLREASMENGERKKLSSTLSDGDHKEENKLKQGIPQDLSSSPKLDRYKIARQLTEKAIKERKIFSIYGHYPVIRATLRRKGWVEKKFNFFPKALQNLGSEDKSAETKENQEIALERFDDIHDVMSRLVKNEIPYLLWTIKRDVVDYHSLTCDQMLNHYGKTASFTTKIGLCLNMRSLPWYVQANPNTFFPRCYGLCTESEKQEFLDDFRRTVAASILKWVVLHQNYCSKVKGKSKKEEAKNSDPSPKKDPENPDLKLPSLSGQVVDTACKVCQAYLGQLEHEDIDVSEASTEALSEEEWNDLTQQYYLLVHGNASITDSKSYFAQCQALLSKISSVNPQTEIDGIRNIWIIKPAAKSRGRDIVCMDRVENILSLVAADSQTTKDNKWVVQKYIETPMLIYDTKFDIRQWFLVTDWNPLTIWFYKESYLRFSTQRFSLDKLDSAIHLCNNSIQRRLKNDKERSPLLPCHNMWTSTRFQEYLQKRGRGGTWGSIIYPSMKRAVTNAMRVAQDHVEARKNSFELYGADFILGRDFKPWLIEINSSPTMHPSTPVTAQLCAQVQEDTIKVVVDRKLDRNCDIGNFELLWRQPAVELPPFNGSDLCVEGISVKKAKKQMPPIASVGLSESLLDAPPKVRSARALMETVIRPPRTTVRQDWKREEAKVLSTTWSMPVMDAEVRGRAKPIYAFEVNDYQHVDNKSHKSGYTRVQSSKVPGVTLTSAQHPALFAQTMKPTQMTSSPPPTASGNHRDSSPFCPIVFEELWLHPNSQRRPSSCILQSRAQGWIRGIP.

The segment covering 1–13 (MSCPPTPNPPFRP) has biased composition (pro residues). Disordered stretches follow at residues 1–84 (MSCP…QDLS) and 277–304 (GKSK…KLPS). 3 stretches are compositionally biased toward basic and acidic residues: residues 46–59 (QLRE…ERKK), 66–75 (DGDHKEENKL), and 280–299 (KKEE…ENPD). The 354-residue stretch at 271 to 624 (YCSKVKGKSK…RKLDRNCDIG (354 aa)) folds into the TTL domain. Residues Lys397, 403 to 404 (RG), 435 to 438 (QKYI), 448 to 450 (KFD), and 492 to 493 (CN) contribute to the ATP site. Residue Arg403 participates in a protein binding. Ser495 provides a ligand contact to L-glutamate. Positions 570, 583, and 585 each coordinate Mg(2+). An ATP-binding site is contributed by Glu583.

Mg(2+) serves as cofactor. As to expression, highly expressed in testis. Expressed in brain, heart, kidney, liver, lung, muscle, spleen and trachea. Expressed in sperm flagellum. In the brain, specifically expressed in ependymal cilia.

Its subcellular location is the cytoplasm. It is found in the cytoskeleton. The protein resides in the cell projection. It localises to the cilium. The protein localises to the cilium axoneme. Its subcellular location is the flagellum axoneme. The catalysed reaction is L-glutamyl-[protein] + glycine + ATP = glycyl-L-glutamyl-[protein] + ADP + phosphate + H(+). Its function is as follows. Monoglycylase which modifies both tubulin and non-tubulin proteins, adding a single glycine on the gamma-carboxyl groups of specific glutamate residues to generate monoglycine side chains within the C-terminal tail of target proteins. Not involved in elongation step of the polyglycylation reaction. Preferentially monoglycylates alpha-tubulin over beta-tubulin. Together with TTLL3, mediates microtubule glycylation of primary and motile cilia, which is essential for their stability and maintenance. Together with TTLL3, glycylates sperm flagella which regulates axonemal dynein motor activity, thereby controlling flagellar beat, directional sperm swimming and male fertility. Monoglycylates non-tubulin proteins such as ANP32A, ANP32B, SET, NCL and NAP1. The sequence is that of Protein monoglycylase TTLL8 from Mus musculus (Mouse).